Reading from the N-terminus, the 73-residue chain is Putative membrane protein insertion efficiency factor (73 aa).

Belongs to the UPF0161 family.

It is found in the cell inner membrane. In terms of biological role, could be involved in insertion of integral membrane proteins into the membrane. The polypeptide is Putative membrane protein insertion efficiency factor (Neisseria meningitidis serogroup C / serotype 2a (strain ATCC 700532 / DSM 15464 / FAM18)).